A 608-amino-acid chain; its full sequence is V-type ATP synthase subunit I (608 aa).

9 helical membrane-spanning segments follow: residues I308–G325, A327–L346, G356–F376, I405–F425, I438–I458, F464–F484, C495–A515, I517–F537, and I550–L570.

Belongs to the V-ATPase 116 kDa subunit family.

The protein localises to the cell membrane. Functionally, produces ATP from ADP in the presence of a proton gradient across the membrane. The sequence is that of V-type ATP synthase subunit I (atpI) from Borreliella burgdorferi (strain ATCC 35210 / DSM 4680 / CIP 102532 / B31) (Borrelia burgdorferi).